The primary structure comprises 444 residues: Putative methylesterase 13, chloroplastic (444 aa).

Disordered stretches follow at residues 1–32 (MGNS…KYKY), 49–90 (PSLS…KDSH), and 124–176 (SVVY…QLVD). The N-terminal 60 residues, 1 to 60 (MGNSFTCISHEQEQRPKKSSGGGGNNSGKYKYVRRLSLMPSFRRRTLLPSLSCSGSSSTS), are a transit peptide targeting the chloroplast. Residues 49 to 64 (PSLSCSGSSSTSSSKK) show a composition bias toward low complexity. Basic residues predominate over residues 65–82 (GGIKAKTKKIRERHHHHH). Positions 124 to 148 (SVVYPSAQPSGTSSGPVSAVQTPKK) are enriched in polar residues. Low complexity predominate over residues 149-164 (SSAGFVRSSSSRQRSS). Residues 190–310 (FVLVHGGGFG…LFNQQLGSND (121 aa)) enclose the AB hydrolase-1 domain. The Acyl-ester intermediate role is filled by Asp264. Residues Asp390 and His418 each act as charge relay system in the active site.

This sequence belongs to the AB hydrolase superfamily. Methylesterase family.

It localises to the plastid. The protein resides in the chloroplast. Functionally, putative methylesterase. The polypeptide is Putative methylesterase 13, chloroplastic (Arabidopsis thaliana (Mouse-ear cress)).